We begin with the raw amino-acid sequence, 825 residues long: MAAGNAKGGFAHRNKSVPKKTDAKSLKRKRGQEDLGKLKAAIEELDPKSPAIKQFTDLPLCEATASGLRASHFEVLTDVQRAAIPLALKGRDILGAAKTGSGKTLAFLVPVLEKLYHAKWTEYDGLGALIISPTRELAVQIFEVLRKIGRNHFFSAGLVIGGKSLKEEAERLGRMNILVCTPGRMLQHLDQTANFDVNNLQILVLDEADRIMDMGFQSAVDALVEHLPTTRQTLLFSATQSKRVSDLARLSLKEPEYVSAHEAAVSATPTNLQQSYIVTPLAEKLDTLFGFLRTNLKSKIIVFFSSGKQVRFVFESFKRMQPGIPLLHLHGRQKQVARMEITSRFSSAKYGCLFATDVVARGVDFPAVDWVVQADCPEDADTYIHRVGRTARYESKGRAVLFLEPSEEAGFLKRLEQKKVPLQKVNVRENKKKSIKNELQSYNFQSPDLKYLGQKAFISYTRSIYLQKDKEVFNFNKLDLDGYAASLGLAGTPQIKYQKGDDIKRLKNASRAAISSGSESDSDDEGKPKKDKKQVRTKYEKMAERQNQDILSSHYRKLLGEDGDAAASDDDDDFLSVKRVLADDAQIDAAAGGDATNTTTTEPKVIKLGNSELIIDSNRREKLLKSKKKLLKYMDKGTKLVFDDDGVARPVYELQDEDDFAQQGPAAALRQQFVAAESEKVKEADVDDKQAAKMRRREKRERQKARERGEELERVGAGGGGGGVAMLDGGEGDEGDEDPLALLRSLPIAGEESDGGRGGGGEDEGDDGEVEPPRKKARKWFQDDSDQEEEERQKKKKGGKKVIEMAEEPENLEDLEALAAGLLED.

Residues 1-34 (MAAGNAKGGFAHRNKSVPKKTDAKSLKRKRGQED) are disordered. Over residues 19 to 34 (KKTDAKSLKRKRGQED) the composition is skewed to basic and acidic residues. The Q motif motif lies at 53-81 (KQFTDLPLCEATASGLRASHFEVLTDVQR). A Helicase ATP-binding domain is found at 84-258 (IPLALKGRDI…RLSLKEPEYV (175 aa)). 97–104 (AKTGSGKT) is an ATP binding site. The DEAD box signature appears at 206–209 (DEAD). The Helicase C-terminal domain maps to 284 to 439 (KLDTLFGFLR…NKKKSIKNEL (156 aa)). 2 disordered regions span residues 508 to 536 (NASR…KQVR) and 676 to 825 (AESE…LLED). 2 stretches are compositionally biased toward basic and acidic residues: residues 677–691 (ESEK…DKQA) and 700–714 (RERQ…ELER). Composition is skewed to acidic residues over residues 730–739 (GEGDEGDEDP), 761–770 (GEDEGDDGEV), and 805–816 (MAEEPENLEDLE).

It belongs to the DEAD box helicase family. DDX10/DBP4 subfamily. Interacts with the U3 and U14 snoRNAs. Associates with pre-ribosomal complexes.

The protein resides in the nucleus. It localises to the nucleolus. It carries out the reaction ATP + H2O = ADP + phosphate + H(+). Its function is as follows. ATP-dependent RNA helicase required for ribosome biogenesis. Involved in the release of U14 snoRNA in pre-ribosomal complexes. Required for pre-rRNA cleavage at site A2. The sequence is that of ATP-dependent RNA helicase DBP4 (DBP4) from Chaetomium globosum (strain ATCC 6205 / CBS 148.51 / DSM 1962 / NBRC 6347 / NRRL 1970) (Soil fungus).